Here is a 509-residue protein sequence, read N- to C-terminus: tRNA-2-methylthio-N(6)-dimethylallyladenosine synthase (509 aa).

Over residues 1–15 the composition is skewed to polar residues; that stretch reads MNEQQRLASQQVNSS. The tract at residues 1–26 is disordered; it reads MNEQQRLASQQVNSSTKKEEKDYSKY. Residues 16–25 are compositionally biased toward basic and acidic residues; that stretch reads TKKEEKDYSK. Residues 66–184 enclose the MTTase N-terminal domain; it reads RKFYIRTYGC…LPYILKDAMF (119 aa). [4Fe-4S] cluster contacts are provided by Cys-75, Cys-111, Cys-145, Cys-221, Cys-225, and Cys-228. A Radical SAM core domain is found at 207 to 437; sequence RRGDIKAWVN…NALVNKLAIE (231 aa). The TRAM domain maps to 440–503; that stretch reads DRYKGQIVEV…TWSLNGELVE (64 aa).

Belongs to the methylthiotransferase family. MiaB subfamily. Monomer. It depends on [4Fe-4S] cluster as a cofactor.

It is found in the cytoplasm. The catalysed reaction is N(6)-dimethylallyladenosine(37) in tRNA + (sulfur carrier)-SH + AH2 + 2 S-adenosyl-L-methionine = 2-methylsulfanyl-N(6)-dimethylallyladenosine(37) in tRNA + (sulfur carrier)-H + 5'-deoxyadenosine + L-methionine + A + S-adenosyl-L-homocysteine + 2 H(+). Its function is as follows. Catalyzes the methylthiolation of N6-(dimethylallyl)adenosine (i(6)A), leading to the formation of 2-methylthio-N6-(dimethylallyl)adenosine (ms(2)i(6)A) at position 37 in tRNAs that read codons beginning with uridine. The chain is tRNA-2-methylthio-N(6)-dimethylallyladenosine synthase from Bacillus cereus (strain ZK / E33L).